We begin with the raw amino-acid sequence, 281 residues long: 2-dehydro-3-deoxyphosphooctonate aldolase (281 aa).

The protein belongs to the KdsA family.

It is found in the cytoplasm. It catalyses the reaction D-arabinose 5-phosphate + phosphoenolpyruvate + H2O = 3-deoxy-alpha-D-manno-2-octulosonate-8-phosphate + phosphate. It functions in the pathway carbohydrate biosynthesis; 3-deoxy-D-manno-octulosonate biosynthesis; 3-deoxy-D-manno-octulosonate from D-ribulose 5-phosphate: step 2/3. Its pathway is bacterial outer membrane biogenesis; lipopolysaccharide biosynthesis. The sequence is that of 2-dehydro-3-deoxyphosphooctonate aldolase from Acidithiobacillus ferrooxidans (strain ATCC 23270 / DSM 14882 / CIP 104768 / NCIMB 8455) (Ferrobacillus ferrooxidans (strain ATCC 23270)).